The primary structure comprises 222 residues: Cytidylate kinase (222 aa).

10–18 (GPAGAGKST) is an ATP binding site.

This sequence belongs to the cytidylate kinase family. Type 1 subfamily.

The protein resides in the cytoplasm. The catalysed reaction is CMP + ATP = CDP + ADP. The enzyme catalyses dCMP + ATP = dCDP + ADP. The sequence is that of Cytidylate kinase from Halalkalibacterium halodurans (strain ATCC BAA-125 / DSM 18197 / FERM 7344 / JCM 9153 / C-125) (Bacillus halodurans).